Reading from the N-terminus, the 477-residue chain is Bifunctional protein HldE (477 aa).

The segment at 1–318 (MKVTLPEFER…ENAVRGRADT (318 aa)) is ribokinase. K179 bears the N6-acetyllysine mark. 195–198 (NLSE) provides a ligand contact to ATP. D264 is a catalytic residue. The segment at 344–477 (MTNGVFDILH…IKKIQQDKKG (134 aa)) is cytidylyltransferase.

This sequence in the N-terminal section; belongs to the carbohydrate kinase PfkB family. It in the C-terminal section; belongs to the cytidylyltransferase family. As to quaternary structure, homodimer.

The catalysed reaction is D-glycero-beta-D-manno-heptose 7-phosphate + ATP = D-glycero-beta-D-manno-heptose 1,7-bisphosphate + ADP + H(+). It carries out the reaction D-glycero-beta-D-manno-heptose 1-phosphate + ATP + H(+) = ADP-D-glycero-beta-D-manno-heptose + diphosphate. It functions in the pathway nucleotide-sugar biosynthesis; ADP-L-glycero-beta-D-manno-heptose biosynthesis; ADP-L-glycero-beta-D-manno-heptose from D-glycero-beta-D-manno-heptose 7-phosphate: step 1/4. The protein operates within nucleotide-sugar biosynthesis; ADP-L-glycero-beta-D-manno-heptose biosynthesis; ADP-L-glycero-beta-D-manno-heptose from D-glycero-beta-D-manno-heptose 7-phosphate: step 3/4. It participates in bacterial outer membrane biogenesis; LPS core biosynthesis. In terms of biological role, catalyzes the phosphorylation of D-glycero-D-manno-heptose 7-phosphate at the C-1 position to selectively form D-glycero-beta-D-manno-heptose-1,7-bisphosphate. Catalyzes the ADP transfer from ATP to D-glycero-beta-D-manno-heptose 1-phosphate, yielding ADP-D-glycero-beta-D-manno-heptose. The sequence is that of Bifunctional protein HldE from Shigella flexneri.